Here is a 158-residue protein sequence, read N- to C-terminus: E3 ubiquitin ligase complex SCF subunit sconC (158 aa).

The interaction with the F-box domain of F-box proteins stretch occupies residues 100 to 158; that stretch reads ILAANYLDIKALLDVGCKTVANMIKGKSPEEIRKTFNIQNDFTPEEEDQIRRENEWAEE.

Belongs to the SKP1 family. As to quaternary structure, component of the SCF (SKP1-CUL1-F-box protein) E3 ubiquitin ligase complexes.

The protein operates within protein modification; protein ubiquitination. Functionally, essential component of the SCF (SKP1-CUL1-F-box protein) E3 ubiquitin ligase complexes, which mediate the ubiquitination and subsequent proteasomal degradation of target proteins. Controls sulfur metabolite repression, probably by mediating the inactivation or degradation of the metR transcription factor. This is E3 ubiquitin ligase complex SCF subunit sconC (sconC) from Aspergillus fumigatus (strain CBS 144.89 / FGSC A1163 / CEA10) (Neosartorya fumigata).